Consider the following 499-residue polypeptide: ATP synthase subunit alpha (499 aa).

An ATP-binding site is contributed by 169 to 176 (GDRGTGKT).

Belongs to the ATPase alpha/beta chains family. F-type ATPases have 2 components, CF(1) - the catalytic core - and CF(0) - the membrane proton channel. CF(1) has five subunits: alpha(3), beta(3), gamma(1), delta(1), epsilon(1). CF(0) has three main subunits: a(1), b(2) and c(9-12). The alpha and beta chains form an alternating ring which encloses part of the gamma chain. CF(1) is attached to CF(0) by a central stalk formed by the gamma and epsilon chains, while a peripheral stalk is formed by the delta and b chains.

The protein resides in the cell inner membrane. It catalyses the reaction ATP + H2O + 4 H(+)(in) = ADP + phosphate + 5 H(+)(out). In terms of biological role, produces ATP from ADP in the presence of a proton gradient across the membrane. The alpha chain is a regulatory subunit. This is ATP synthase subunit alpha from Brachyspira hyodysenteriae (strain ATCC 49526 / WA1).